Consider the following 230-residue polypeptide: Fibrillarin-like rRNA/tRNA 2'-O-methyltransferase (230 aa).

Residues 87–88 (TT), 105–106 (EF), 130–131 (DA), and 150–153 (DVAQ) contribute to the S-adenosyl-L-methionine site.

It belongs to the methyltransferase superfamily. Fibrillarin family. Interacts with nop5. Component of box C/D small ribonucleoprotein (sRNP) particles that contain rpl7ae, FlpA and nop5, plus a guide RNA.

In terms of biological role, involved in pre-rRNA and tRNA processing. Utilizes the methyl donor S-adenosyl-L-methionine to catalyze the site-specific 2'-hydroxyl methylation of ribose moieties in rRNA and tRNA. Site specificity is provided by a guide RNA that base pairs with the substrate. Methylation occurs at a characteristic distance from the sequence involved in base pairing with the guide RNA. The polypeptide is Fibrillarin-like rRNA/tRNA 2'-O-methyltransferase (Methanococcus maripaludis (strain DSM 14266 / JCM 13030 / NBRC 101832 / S2 / LL)).